We begin with the raw amino-acid sequence, 1117 residues long: Leucine-rich repeats and immunoglobulin-like domains protein 3 (1117 aa).

The N-terminal stretch at 1–24 (MGAPGLRAATAALGLLLCAGLGRA) is a signal peptide. The LRRNT domain occupies 38–74 (LLDDDAQRPCPAACHCLGDLLDCSRRRLVRLPDPLPA). 15 LRR repeats span residues 75 to 98 (WVTRLDLSHNRLSFIQTSSLSHLQ), 99 to 120 (SLQEVKLNNNELETIPNLGSIS), 122 to 143 (NIRQLSLAGNAIDKILPEQLEA), 146 to 168 (SLETLDLSNNNISELRTAFPPLQ), 169 to 189 (LKYLYINNNRVSSMEPGYFDN), 193 to 214 (TLLVLKLNRNRISAIPPKMFKL), 216 to 237 (QLQHLELNRNKIKNVDGLTFQG), 240 to 261 (ALKSLKMQRNGVTKLMDGAFWG), 264 to 285 (NMEVLQLDHNNLTEITKGWLYG), 288 to 309 (MLRELHLSQNAINRISPDAWEF), 312 to 333 (KLSELDLTFNHLSRLDDSSFLG), 336 to 357 (LLNALHIGNNKVSYIADCAFRG), 360 to 382 (SLKTLDLRNNEISWTIEDMSGAF), 387 to 408 (RLRQLILQGNRIRSITKKAFAG), and 411 to 432 (TLEHLDLSGNAIMSLQSNAFSQ). The N-linked (GlcNAc...) asparagine glycan is linked to Asn156. An N-linked (GlcNAc...) asparagine glycan is attached at Asn274. 2 N-linked (GlcNAc...) asparagine glycosylation sites follow: Asn442 and Asn469. The LRRCT domain maps to 444 to 495 (SSLLCDCQLRWLPQWVAENNFQSFVNASCAHPQLLKGRSIFTVSPDGFVCDD). Ig-like C2-type domains follow at residues 499-598 (PQIT…AKLT), 603-692 (PSFT…ATLT), and 697-783 (PSFL…VRLS). 2 cysteine pairs are disulfide-bonded: Cys520–Cys581 and Cys624–Cys676. N-linked (GlcNAc...) asparagine glycosylation is found at Asn688 and Asn729. Cys718 and Cys767 are joined by a disulfide. Residues 810 to 830 (VVIIAVVCCVVGTSLVWVVII) form a helical membrane-spanning segment. Asn1014 carries N-linked (GlcNAc...) asparagine glycosylation. Residues 1019–1093 (DFSTGPEPGS…KERTDFREEN (75 aa)) form a disordered region. The span at 1083–1093 (DKERTDFREEN) shows a compositional bias: basic and acidic residues.

Interacts with EGFR, ERBB2 and ERBB4 (in vitro). In terms of tissue distribution, widely expressed.

It localises to the cell membrane. It is found in the cytoplasmic vesicle membrane. In terms of biological role, plays a role in craniofacial and inner ear morphogenesis during embryonic development. Acts within the otic vesicle epithelium to control formation of the lateral semicircular canal in the inner ear, possibly by restricting the expression of NTN1. The polypeptide is Leucine-rich repeats and immunoglobulin-like domains protein 3 (Lrig3) (Mus musculus (Mouse)).